A 159-amino-acid polypeptide reads, in one-letter code: Lipoprotein signal peptidase (159 aa).

The next 3 membrane-spanning stretches (helical) occupy residues 4–24 (PYFVSITLFITIAVLILDQVT), 64–84 (MSFFFIVTIVVLGLLVFFYIK), and 88–108 (GNFLMQVAISLLFAGALGNFI). Residues aspartate 118 and aspartate 136 contribute to the active site. The helical transmembrane segment at 131–151 (IFNGADSSLTIGVILVLIALL) threads the bilayer.

It belongs to the peptidase A8 family.

The protein localises to the cell membrane. It carries out the reaction Release of signal peptides from bacterial membrane prolipoproteins. Hydrolyzes -Xaa-Yaa-Zaa-|-(S,diacylglyceryl)Cys-, in which Xaa is hydrophobic (preferably Leu), and Yaa (Ala or Ser) and Zaa (Gly or Ala) have small, neutral side chains.. Its pathway is protein modification; lipoprotein biosynthesis (signal peptide cleavage). Functionally, this protein specifically catalyzes the removal of signal peptides from prolipoproteins. This Staphylococcus carnosus (strain TM300) protein is Lipoprotein signal peptidase.